Reading from the N-terminus, the 324-residue chain is Homeobox protein Nkx-2.5 (324 aa).

The homeobox DNA-binding region spans 138–197; sequence RRKPRVLFSQAQVYELERRFKQQRYLSAPERDQLASVLKLTSTQVKIWFQNRRYKCKRQR.

It belongs to the NK-2 homeobox family. Homodimer (via the homeobox); binds DNA as homodimer. Interacts (via the homeobox) with TBX5 (via the T-box); this complex binds DNA. Interacts with HIPK1 and HIPK2, but not HIPK3. Interacts with the C-terminal zinc finger of GATA4 through its homeobox domain. Also interacts with JARID2 which represses its ability to activate transcription of ANF. Interacts with FBLIM1. Interacts with TBX18. Interacts with histone methyltransferase NSD2 (via HMG box). Interacts with NEDD9. Interacts with TBX1. In terms of tissue distribution, expressed only in the heart.

The protein localises to the nucleus. Functionally, transcription factor required for the development of the heart and the spleen. During heart development, acts as a transcriptional activator of NPPA/ANF in cooperation with GATA4. May cooperate with TBX2 to negatively modulate expression of NPPA/ANF in the atrioventricular canal. Binds to the core DNA motif of NPPA promoter. Together with PBX1, required for spleen development through a mechanism that involves CDKN2B repression. Positively regulates transcription of genes such as COL3A1 and MMP2, resulting in increased pulmonary endothelial fibrosis in response to hypoxia. This chain is Homeobox protein Nkx-2.5 (NKX2-5), found in Homo sapiens (Human).